A 317-amino-acid polypeptide reads, in one-letter code: Ribosomal RNA small subunit methyltransferase H (317 aa).

Residues 39 to 41 (GGH), D59, F83, D104, and Q111 contribute to the S-adenosyl-L-methionine site.

Belongs to the methyltransferase superfamily. RsmH family.

Its subcellular location is the cytoplasm. The catalysed reaction is cytidine(1402) in 16S rRNA + S-adenosyl-L-methionine = N(4)-methylcytidine(1402) in 16S rRNA + S-adenosyl-L-homocysteine + H(+). Specifically methylates the N4 position of cytidine in position 1402 (C1402) of 16S rRNA. In Paraburkholderia xenovorans (strain LB400), this protein is Ribosomal RNA small subunit methyltransferase H.